Reading from the N-terminus, the 780-residue chain is ATP-dependent DNA helicase RecG (780 aa).

Domain regions lie at residues 1–350 (MLCS…GGIP), 351–549 (KKIE…EMPP), and 550–780 (GRKE…IEVG). The tract at residues 154–252 (RKIFKLNDLL…VTPKEGEYVR (99 aa)) is wedge domain. ATP is bound by residues Phe367, Leu369, Gly399, Ser400, Gly401, Lys402, Thr403, and Arg436. In terms of domain architecture, Helicase ATP-binding spans 383–544 (DMISEKPMNR…FYGDLDVTVI (162 aa)). Residues 497–500 (DEQH) carry the DEAH box motif. The Helicase C-terminal domain occupies 563-728 (RVNEVYEFVR…EYDLKTRGPG (166 aa)).

It belongs to the helicase family. RecG subfamily. In terms of assembly, monomer.

The catalysed reaction is Couples ATP hydrolysis with the unwinding of duplex DNA by translocating in the 3'-5' direction.. It catalyses the reaction ATP + H2O = ADP + phosphate + H(+). Its function is as follows. Plays a critical role in recombination and DNA repair. Helps process Holliday junction intermediates to mature products by catalyzing branch migration. Has replication fork (Y-DNA) regression activity, unwinds stalled or blocked replication forks to make a HJ that can be resolved. Has a DNA unwinding activity characteristic of a DNA helicase with 3'-5' polarity. Might be a DNA translocase rather than a bona fide helicase. This Thermotoga maritima (strain ATCC 43589 / DSM 3109 / JCM 10099 / NBRC 100826 / MSB8) protein is ATP-dependent DNA helicase RecG.